The sequence spans 72 residues: Translation initiation factor IF-1 (72 aa).

The 72-residue stretch at 1-72 (MAKSDVIEVE…SKGRITYRFK (72 aa)) folds into the S1-like domain.

This sequence belongs to the IF-1 family. Component of the 30S ribosomal translation pre-initiation complex which assembles on the 30S ribosome in the order IF-2 and IF-3, IF-1 and N-formylmethionyl-tRNA(fMet); mRNA recruitment can occur at any time during PIC assembly.

It localises to the cytoplasm. Its function is as follows. One of the essential components for the initiation of protein synthesis. Stabilizes the binding of IF-2 and IF-3 on the 30S subunit to which N-formylmethionyl-tRNA(fMet) subsequently binds. Helps modulate mRNA selection, yielding the 30S pre-initiation complex (PIC). Upon addition of the 50S ribosomal subunit IF-1, IF-2 and IF-3 are released leaving the mature 70S translation initiation complex. In Levilactobacillus brevis (strain ATCC 367 / BCRC 12310 / CIP 105137 / JCM 1170 / LMG 11437 / NCIMB 947 / NCTC 947) (Lactobacillus brevis), this protein is Translation initiation factor IF-1.